Here is a 493-residue protein sequence, read N- to C-terminus: UDP-N-acetylmuramoyl-L-alanyl-D-glutamate--2,6-diaminopimelate ligase (493 aa).

Threonine 32 is a UDP-N-acetyl-alpha-D-muramoyl-L-alanyl-D-glutamate binding site. 110–116 contributes to the ATP binding site; that stretch reads GTNGKTT. UDP-N-acetyl-alpha-D-muramoyl-L-alanyl-D-glutamate is bound by residues asparagine 151, 152 to 153, serine 179, and arginine 187; that span reads TT. Lysine 219 carries the post-translational modification N6-carboxylysine. Meso-2,6-diaminopimelate-binding positions include arginine 386, 410–413, glycine 460, and glutamate 464; that span reads DNPR. Positions 410 to 413 match the Meso-diaminopimelate recognition motif motif; the sequence is DNPR.

The protein belongs to the MurCDEF family. MurE subfamily. It depends on Mg(2+) as a cofactor. Post-translationally, carboxylation is probably crucial for Mg(2+) binding and, consequently, for the gamma-phosphate positioning of ATP.

The protein localises to the cytoplasm. It carries out the reaction UDP-N-acetyl-alpha-D-muramoyl-L-alanyl-D-glutamate + meso-2,6-diaminopimelate + ATP = UDP-N-acetyl-alpha-D-muramoyl-L-alanyl-gamma-D-glutamyl-meso-2,6-diaminopimelate + ADP + phosphate + H(+). It participates in cell wall biogenesis; peptidoglycan biosynthesis. Catalyzes the addition of meso-diaminopimelic acid to the nucleotide precursor UDP-N-acetylmuramoyl-L-alanyl-D-glutamate (UMAG) in the biosynthesis of bacterial cell-wall peptidoglycan. The protein is UDP-N-acetylmuramoyl-L-alanyl-D-glutamate--2,6-diaminopimelate ligase of Lactiplantibacillus plantarum (strain ATCC BAA-793 / NCIMB 8826 / WCFS1) (Lactobacillus plantarum).